A 114-amino-acid polypeptide reads, in one-letter code: Nucleoid-associated protein Clos_2855 (114 aa).

Belongs to the YbaB/EbfC family. In terms of assembly, homodimer.

It is found in the cytoplasm. It localises to the nucleoid. Functionally, binds to DNA and alters its conformation. May be involved in regulation of gene expression, nucleoid organization and DNA protection. The sequence is that of Nucleoid-associated protein Clos_2855 from Alkaliphilus oremlandii (strain OhILAs) (Clostridium oremlandii (strain OhILAs)).